Here is a 348-residue protein sequence, read N- to C-terminus: Alcohol dehydrogenase 1 (348 aa).

Zn(2+)-binding residues include cysteine 44, histidine 67, cysteine 98, cysteine 101, cysteine 104, cysteine 112, and cysteine 154. Residues 178–184 (GAGGGLG), aspartate 202, lysine 207, 269–271 (VGL), and arginine 341 contribute to the NAD(+) site.

It belongs to the zinc-containing alcohol dehydrogenase family. Homotetramer. It depends on Zn(2+) as a cofactor.

It localises to the cytoplasm. It catalyses the reaction a primary alcohol + NAD(+) = an aldehyde + NADH + H(+). The enzyme catalyses a secondary alcohol + NAD(+) = a ketone + NADH + H(+). Converts ethanol to acetaldehyde and plays a major role in xylose fermentation. This Scheffersomyces stipitis (strain ATCC 58785 / CBS 6054 / NBRC 10063 / NRRL Y-11545) (Yeast) protein is Alcohol dehydrogenase 1 (ADH1).